The sequence spans 1237 residues: U3 small nucleolar RNA-associated protein 22 (1237 aa).

The segment at 1–78 (MATSVKRKAS…TNTAATRHNG (78 aa)) is disordered. A phosphoserine mark is found at S10 and S58. Phosphothreonine is present on T60. Residues 61-78 (SPESNEVATNTAATRHNG) are compositionally biased toward polar residues. Phosphoserine is present on S64.

It belongs to the NRAP family. As to quaternary structure, interacts with snoRNA U3. Interacts with MPP10. Component of the ribosomal small subunit (SSU) processome composed of at least 40 protein subunits and snoRNA U3. Interacts with UBP10.

Its subcellular location is the nucleus. It localises to the nucleolus. Its function is as follows. Involved in nucleolar processing of pre-18S ribosomal RNA and ribosome assembly. The chain is U3 small nucleolar RNA-associated protein 22 (UTP22) from Saccharomyces cerevisiae (strain ATCC 204508 / S288c) (Baker's yeast).